The sequence spans 382 residues: Succinate--CoA ligase [ADP-forming] subunit beta (382 aa).

Residues 9–240 (KELLKKYGLP…ITQIDPLEVE (232 aa)) enclose the ATP-grasp domain. ATP contacts are provided by Lys46, Glu98, Thr101, and Glu106. Mg(2+) contacts are provided by Asn195 and Asp209. Substrate-binding positions include Asn260 and 317–319 (GIL).

This sequence belongs to the succinate/malate CoA ligase beta subunit family. As to quaternary structure, heterotetramer of two alpha and two beta subunits. It depends on Mg(2+) as a cofactor.

It catalyses the reaction succinate + ATP + CoA = succinyl-CoA + ADP + phosphate. The enzyme catalyses GTP + succinate + CoA = succinyl-CoA + GDP + phosphate. It functions in the pathway carbohydrate metabolism; tricarboxylic acid cycle; succinate from succinyl-CoA (ligase route): step 1/1. Succinyl-CoA synthetase functions in the citric acid cycle (TCA), coupling the hydrolysis of succinyl-CoA to the synthesis of either ATP or GTP and thus represents the only step of substrate-level phosphorylation in the TCA. The beta subunit provides nucleotide specificity of the enzyme and binds the substrate succinate, while the binding sites for coenzyme A and phosphate are found in the alpha subunit. The protein is Succinate--CoA ligase [ADP-forming] subunit beta of Hydrogenobaculum sp. (strain Y04AAS1).